Consider the following 357-residue polypeptide: Putative minor fimbrial subunit PmfE (357 aa).

Positions 1–28 (MILNKKNIHSKSVMLFCAGIVSLMPLHA) are cleaved as a signal peptide.

The protein resides in the fimbrium. The chain is Putative minor fimbrial subunit PmfE (pmfE) from Proteus mirabilis (strain HI4320).